The following is a 105-amino-acid chain: Large ribosomal subunit protein uL24 (105 aa).

The protein belongs to the universal ribosomal protein uL24 family. In terms of assembly, part of the 50S ribosomal subunit.

In terms of biological role, one of two assembly initiator proteins, it binds directly to the 5'-end of the 23S rRNA, where it nucleates assembly of the 50S subunit. Functionally, one of the proteins that surrounds the polypeptide exit tunnel on the outside of the subunit. This is Large ribosomal subunit protein uL24 from Hahella chejuensis (strain KCTC 2396).